A 423-amino-acid chain; its full sequence is Histidine--tRNA ligase (423 aa).

Belongs to the class-II aminoacyl-tRNA synthetase family. Homodimer.

It localises to the cytoplasm. The catalysed reaction is tRNA(His) + L-histidine + ATP = L-histidyl-tRNA(His) + AMP + diphosphate + H(+). The protein is Histidine--tRNA ligase (hisS) of Mycobacterium bovis (strain ATCC BAA-935 / AF2122/97).